We begin with the raw amino-acid sequence, 268 residues long: Glucosamine-6-phosphate deaminase (268 aa).

The Proton acceptor; for enolization step role is filled by Asp72. Catalysis depends on Asp141, which acts as the For ring-opening step. His143 (proton acceptor; for ring-opening step) is an active-site residue. The active-site For ring-opening step is Glu148.

The protein belongs to the glucosamine/galactosamine-6-phosphate isomerase family. NagB subfamily. As to quaternary structure, homohexamer.

It carries out the reaction alpha-D-glucosamine 6-phosphate + H2O = beta-D-fructose 6-phosphate + NH4(+). It functions in the pathway amino-sugar metabolism; N-acetylneuraminate degradation; D-fructose 6-phosphate from N-acetylneuraminate: step 5/5. Allosterically activated by N-acetylglucosamine 6-phosphate (GlcNAc6P). In terms of biological role, catalyzes the reversible isomerization-deamination of glucosamine 6-phosphate (GlcN6P) to form fructose 6-phosphate (Fru6P) and ammonium ion. The polypeptide is Glucosamine-6-phosphate deaminase (Proteus mirabilis (strain HI4320)).